Reading from the N-terminus, the 89-residue chain is Small ribosomal subunit protein bS16c (89 aa).

Belongs to the bacterial ribosomal protein bS16 family.

The protein resides in the plastid. The protein localises to the chloroplast. This is Small ribosomal subunit protein bS16c from Drimys granadensis.